A 251-amino-acid polypeptide reads, in one-letter code: 3-deoxy-manno-octulosonate cytidylyltransferase (251 aa).

This sequence belongs to the KdsB family.

The protein resides in the cytoplasm. The catalysed reaction is 3-deoxy-alpha-D-manno-oct-2-ulosonate + CTP = CMP-3-deoxy-beta-D-manno-octulosonate + diphosphate. It participates in nucleotide-sugar biosynthesis; CMP-3-deoxy-D-manno-octulosonate biosynthesis; CMP-3-deoxy-D-manno-octulosonate from 3-deoxy-D-manno-octulosonate and CTP: step 1/1. Its pathway is bacterial outer membrane biogenesis; lipopolysaccharide biosynthesis. Activates KDO (a required 8-carbon sugar) for incorporation into bacterial lipopolysaccharide in Gram-negative bacteria. The sequence is that of 3-deoxy-manno-octulosonate cytidylyltransferase from Rhizobium johnstonii (strain DSM 114642 / LMG 32736 / 3841) (Rhizobium leguminosarum bv. viciae).